Consider the following 179-residue polypeptide: MARLLEHYRGEVKPKLKDEMGYKNIMEVPKLEKVVVNMGIGDAKDNPKILDNAVENLEQVTGQKPVVTKAKRSIANFKVRQGMPVGCKVTLRGERMYHFLDKLINVALPRVRDFKGVSPKAFDGRGNYSLGLKEQMVFPELEYDDIERVQGMDIIIATTAETDEEAKKLLERLGMPFSG.

It belongs to the universal ribosomal protein uL5 family. As to quaternary structure, part of the 50S ribosomal subunit; part of the 5S rRNA/L5/L18/L25 subcomplex. Contacts the 5S rRNA and the P site tRNA. Forms a bridge to the 30S subunit in the 70S ribosome.

This is one of the proteins that bind and probably mediate the attachment of the 5S RNA into the large ribosomal subunit, where it forms part of the central protuberance. In the 70S ribosome it contacts protein S13 of the 30S subunit (bridge B1b), connecting the 2 subunits; this bridge is implicated in subunit movement. Contacts the P site tRNA; the 5S rRNA and some of its associated proteins might help stabilize positioning of ribosome-bound tRNAs. This is Large ribosomal subunit protein uL5 from Natranaerobius thermophilus (strain ATCC BAA-1301 / DSM 18059 / JW/NM-WN-LF).